A 302-amino-acid chain; its full sequence is Putative RING-H2 finger protein ATL35 (302 aa).

Positions Met-1–Cys-31 are cleaved as a signal peptide. The chain crosses the membrane as a helical span at residues Thr-50–Leu-70. The RING-type; atypical zinc finger occupies Cys-123–Arg-165. Ser-226 bears the Phosphoserine mark.

It belongs to the RING-type zinc finger family. ATL subfamily.

Its subcellular location is the membrane. The catalysed reaction is S-ubiquitinyl-[E2 ubiquitin-conjugating enzyme]-L-cysteine + [acceptor protein]-L-lysine = [E2 ubiquitin-conjugating enzyme]-L-cysteine + N(6)-ubiquitinyl-[acceptor protein]-L-lysine.. It functions in the pathway protein modification; protein ubiquitination. This Arabidopsis thaliana (Mouse-ear cress) protein is Putative RING-H2 finger protein ATL35 (ATL35).